The primary structure comprises 354 residues: Peroxisomal membrane protein PEX32 (354 aa).

5 consecutive transmembrane segments (helical) span residues 24–44 (LLNMPPVITTALYTAFPVIFL), 63–83 (FIAIAIYIMVVKYWTVVACTV), 84–104 (LPTIIALGTCASLWFLKTTID), 151–171 (GFSLIAITPCYIWLMTRIFTV), and 173–193 (SFLLVFGVAWLSFHSSWSVAT). N319 carries N-linked (GlcNAc...) asparagine glycosylation.

This sequence belongs to the PEX28-32 family. PEX30/31 subfamily.

The protein localises to the peroxisome membrane. It is found in the endoplasmic reticulum membrane. Functionally, with PEX24, contributes to tethering of peroxisomes to the endoplasmic reticulum for organelle biogenesis, positioning and segregation. The polypeptide is Peroxisomal membrane protein PEX32 (Ogataea parapolymorpha (strain ATCC 26012 / BCRC 20466 / JCM 22074 / NRRL Y-7560 / DL-1) (Yeast)).